Consider the following 507-residue polypeptide: Alkyl hydroperoxide reductase subunit F (507 aa).

207–222 contributes to the FAD binding site; the sequence is DVLIVGGGPASGSAAI. C335 and C338 are disulfide-bonded. 347–361 contacts NAD(+); the sequence is DVAVIGGGNSGVEAA. 467 to 477 provides a ligand contact to FAD; it reads TNVPGIFAAGD.

The protein belongs to the class-II pyridine nucleotide-disulfide oxidoreductase family. As to quaternary structure, homodimer. FAD is required as a cofactor.

Serves to protect the cell against DNA damage by alkyl hydroperoxides. It can use either NADH or NADPH as electron donor for direct reduction of redox dyes or of alkyl hydroperoxides when combined with the AhpC protein. The sequence is that of Alkyl hydroperoxide reductase subunit F (ahpF) from Staphylococcus epidermidis (strain ATCC 12228 / FDA PCI 1200).